The chain runs to 155 residues: 6,7-dimethyl-8-ribityllumazine synthase (155 aa).

5-amino-6-(D-ribitylamino)uracil contacts are provided by residues phenylalanine 23, 57 to 59 (AFE), and 81 to 83 (AVI). 86–87 (AT) contacts (2S)-2-hydroxy-3-oxobutyl phosphate. The active-site Proton donor is the histidine 89. Position 114 (phenylalanine 114) interacts with 5-amino-6-(D-ribitylamino)uracil. A (2S)-2-hydroxy-3-oxobutyl phosphate-binding site is contributed by arginine 128.

This sequence belongs to the DMRL synthase family.

It catalyses the reaction (2S)-2-hydroxy-3-oxobutyl phosphate + 5-amino-6-(D-ribitylamino)uracil = 6,7-dimethyl-8-(1-D-ribityl)lumazine + phosphate + 2 H2O + H(+). The protein operates within cofactor biosynthesis; riboflavin biosynthesis; riboflavin from 2-hydroxy-3-oxobutyl phosphate and 5-amino-6-(D-ribitylamino)uracil: step 1/2. In terms of biological role, catalyzes the formation of 6,7-dimethyl-8-ribityllumazine by condensation of 5-amino-6-(D-ribitylamino)uracil with 3,4-dihydroxy-2-butanone 4-phosphate. This is the penultimate step in the biosynthesis of riboflavin. This chain is 6,7-dimethyl-8-ribityllumazine synthase, found in Geotalea uraniireducens (strain Rf4) (Geobacter uraniireducens).